The sequence spans 160 residues: Phosphoribosyl-ATP pyrophosphatase (160 aa).

It belongs to the PRA-PH family.

It localises to the cytoplasm. It carries out the reaction 1-(5-phospho-beta-D-ribosyl)-ATP + H2O = 1-(5-phospho-beta-D-ribosyl)-5'-AMP + diphosphate + H(+). The protein operates within amino-acid biosynthesis; L-histidine biosynthesis; L-histidine from 5-phospho-alpha-D-ribose 1-diphosphate: step 2/9. This is Phosphoribosyl-ATP pyrophosphatase from Granulibacter bethesdensis (strain ATCC BAA-1260 / CGDNIH1).